The chain runs to 344 residues: S-adenosylmethionine:tRNA ribosyltransferase-isomerase (344 aa).

This sequence belongs to the QueA family. In terms of assembly, monomer.

Its subcellular location is the cytoplasm. The enzyme catalyses 7-aminomethyl-7-carbaguanosine(34) in tRNA + S-adenosyl-L-methionine = epoxyqueuosine(34) in tRNA + adenine + L-methionine + 2 H(+). It participates in tRNA modification; tRNA-queuosine biosynthesis. Functionally, transfers and isomerizes the ribose moiety from AdoMet to the 7-aminomethyl group of 7-deazaguanine (preQ1-tRNA) to give epoxyqueuosine (oQ-tRNA). In Nitrosococcus oceani (strain ATCC 19707 / BCRC 17464 / JCM 30415 / NCIMB 11848 / C-107), this protein is S-adenosylmethionine:tRNA ribosyltransferase-isomerase.